Here is a 495-residue protein sequence, read N- to C-terminus: Probable cytochrome P450 508C1 (495 aa).

The helical transmembrane segment at 3-21 threads the bilayer; the sequence is LLNSLLLLFLIYLIHSFYI. C442 lines the heme pocket.

This sequence belongs to the cytochrome P450 family. The cofactor is heme.

The protein resides in the membrane. In Dictyostelium discoideum (Social amoeba), this protein is Probable cytochrome P450 508C1 (cyp508C1).